Consider the following 607-residue polypeptide: Bifunctional lysine-specific demethylase and histidyl-hydroxylase NO66 (607 aa).

Disordered stretches follow at residues 23–121 and 139–184; these read GPTI…IKTN and ATQH…GEVE. Residues 25-37 are compositionally biased toward polar residues; it reads TIQQTGATKTPKT. Residues 39–58 show a composition bias toward basic residues; it reads SKIRRLSIRKSTRKIKHALK. The segment covering 156–167 has biased composition (basic and acidic residues); it reads DKTPVKRVRSDT. Residues 188-405 enclose the JmjC domain; the sequence is EEAEKMFEWL…DLMEKLVPAA (218 aa). Residues His328, Asp330, and His371 each contribute to the Fe cation site.

The protein belongs to the ROX family. NO66 subfamily. It depends on Fe(2+) as a cofactor.

It is found in the nucleus. It catalyses the reaction L-histidyl-[protein] + 2-oxoglutarate + O2 = (3S)-3-hydroxy-L-histidyl-[protein] + succinate + CO2. The catalysed reaction is N(6),N(6)-dimethyl-L-lysyl(36)-[histone H3] + 2 2-oxoglutarate + 2 O2 = L-lysyl(36)-[histone H3] + 2 formaldehyde + 2 succinate + 2 CO2. Functionally, oxygenase that can act as both a histone lysine demethylase and a ribosomal histidine hydroxylase. Specifically demethylates 'Lys-4' (H3K4me) and 'Lys-36' (H3K36me) of histone H3, thereby playing a central role in histone code. Also catalyzes the hydroxylation of 60S ribosomal protein L8. This Branchiostoma floridae (Florida lancelet) protein is Bifunctional lysine-specific demethylase and histidyl-hydroxylase NO66.